A 139-amino-acid chain; its full sequence is Cell division protein SepF (139 aa).

Belongs to the SepF family. Homodimer. Interacts with FtsZ.

It is found in the cytoplasm. Its function is as follows. Cell division protein that is part of the divisome complex and is recruited early to the Z-ring. Probably stimulates Z-ring formation, perhaps through the cross-linking of FtsZ protofilaments. Its function overlaps with FtsA. This Coprothermobacter proteolyticus (strain ATCC 35245 / DSM 5265 / OCM 4 / BT) protein is Cell division protein SepF.